A 541-amino-acid chain; its full sequence is Periplasmic oligopeptide-binding protein OppA (541 aa).

The first 20 residues, 1–20, serve as a signal peptide directing secretion; the sequence is MQHKLLFSAIALALSYSAQA.

It belongs to the bacterial solute-binding protein 5 family. As to quaternary structure, the complex is composed of two ATP-binding proteins (OppD and OppF), two transmembrane proteins (OppB and OppC) and a solute-binding protein (OppA).

The protein localises to the periplasm. Part of the ABC transporter complex OppABCDF involved in the uptake of oligopeptides. Plays an important nutritional role. Binds peptides containing from two to five amino acid residues. This chain is Periplasmic oligopeptide-binding protein OppA (oppA), found in Haemophilus influenzae (strain ATCC 51907 / DSM 11121 / KW20 / Rd).